The following is a 689-amino-acid chain: DNA ligase (689 aa).

NAD(+) is bound by residues 51–55 (DSEYD), 100–101 (SL), and Glu-129. Lys-131 (N6-AMP-lysine intermediate) is an active-site residue. NAD(+) is bound by residues Arg-152, Glu-189, Lys-308, and Lys-332. Cys-426, Cys-429, Cys-444, and Cys-450 together coordinate Zn(2+). The region spanning 609-689 (ADEQPLKGQT…ELLALLAANS (81 aa)) is the BRCT domain.

It belongs to the NAD-dependent DNA ligase family. LigA subfamily. Mg(2+) serves as cofactor. It depends on Mn(2+) as a cofactor.

The enzyme catalyses NAD(+) + (deoxyribonucleotide)n-3'-hydroxyl + 5'-phospho-(deoxyribonucleotide)m = (deoxyribonucleotide)n+m + AMP + beta-nicotinamide D-nucleotide.. Functionally, DNA ligase that catalyzes the formation of phosphodiester linkages between 5'-phosphoryl and 3'-hydroxyl groups in double-stranded DNA using NAD as a coenzyme and as the energy source for the reaction. It is essential for DNA replication and repair of damaged DNA. This is DNA ligase from Shewanella sp. (strain ANA-3).